A 300-amino-acid polypeptide reads, in one-letter code: Cation-efflux pump FieF (300 aa).

Transmembrane regions (helical) follow at residues 12 to 32 (AAIA…FAWW), 39 to 59 (ILAA…NLLV), 82 to 102 (AALA…LTGI), 114 to 134 (PGVG…LVSF), 151 to 171 (MLHY…LALS), and 172 to 192 (WYGW…YILY). Zn(2+) contacts are provided by aspartate 45 and aspartate 49. The Zn(2+) site is built by histidine 153 and aspartate 157.

The protein belongs to the cation diffusion facilitator (CDF) transporter (TC 2.A.4) family. FieF subfamily. In terms of assembly, homodimer.

Its subcellular location is the cell inner membrane. The catalysed reaction is Zn(2+)(in) + H(+)(out) = Zn(2+)(out) + H(+)(in). It catalyses the reaction Cd(2+)(in) + H(+)(out) = Cd(2+)(out) + H(+)(in). It carries out the reaction Fe(2+)(in) + H(+)(out) = Fe(2+)(out) + H(+)(in). Divalent metal cation transporter which exports Zn(2+), Cd(2+) and possibly Fe(2+). May be involved in zinc and iron detoxification by efflux. The chain is Cation-efflux pump FieF from Escherichia fergusonii (strain ATCC 35469 / DSM 13698 / CCUG 18766 / IAM 14443 / JCM 21226 / LMG 7866 / NBRC 102419 / NCTC 12128 / CDC 0568-73).